The chain runs to 515 residues: Carboxyl-terminal-processing peptidase 2, chloroplastic (515 aa).

Residues 198–286 (FKSLRSGTQG…SAVELAIRSG (89 aa)) enclose the PDZ domain. Catalysis depends on charge relay system residues serine 417 and lysine 442.

Belongs to the peptidase S41A family.

It is found in the plastid. Its subcellular location is the chloroplast thylakoid lumen. The catalysed reaction is The enzyme shows specific recognition of a C-terminal tripeptide, Xaa-Yaa-Zaa, in which Xaa is preferably Ala or Leu, Yaa is preferably Ala or Tyr, and Zaa is preferably Ala, but then cleaves at a variable distance from the C-terminus. A typical cleavage is -Ala-Ala-|-Arg-Ala-Ala-Lys-Glu-Asn-Tyr-Ala-Leu-Ala-Ala.. Its function is as follows. Protease involved in the C-terminal processing of the chloroplastic D1 protein of photosystem II. This proteolytic processing is necessary to allow the light-driven assembly of the tetranuclear manganese cluster, which is responsible for photosynthetic water oxidation. This Arabidopsis thaliana (Mouse-ear cress) protein is Carboxyl-terminal-processing peptidase 2, chloroplastic (CTPA2).